The chain runs to 196 residues: Imidazoleglycerol-phosphate dehydratase (196 aa).

This sequence belongs to the imidazoleglycerol-phosphate dehydratase family.

It is found in the cytoplasm. It carries out the reaction D-erythro-1-(imidazol-4-yl)glycerol 3-phosphate = 3-(imidazol-4-yl)-2-oxopropyl phosphate + H2O. Its pathway is amino-acid biosynthesis; L-histidine biosynthesis; L-histidine from 5-phospho-alpha-D-ribose 1-diphosphate: step 6/9. This Clostridium botulinum (strain Kyoto / Type A2) protein is Imidazoleglycerol-phosphate dehydratase.